We begin with the raw amino-acid sequence, 217 residues long: tRNA (guanine-N(7)-)-methyltransferase (217 aa).

S-adenosyl-L-methionine contacts are provided by glutamate 43, aspartate 68, asparagine 101, and asparagine 123. Lysine 127 contacts substrate. Residues 129 to 134 are interaction with RNA; it reads RHNKRR. Substrate-binding positions include aspartate 159 and 196 to 199; that span reads TEYE.

Belongs to the class I-like SAM-binding methyltransferase superfamily. TrmB family.

It carries out the reaction guanosine(46) in tRNA + S-adenosyl-L-methionine = N(7)-methylguanosine(46) in tRNA + S-adenosyl-L-homocysteine. The protein operates within tRNA modification; N(7)-methylguanine-tRNA biosynthesis. Catalyzes the formation of N(7)-methylguanine at position 46 (m7G46) in tRNA. This chain is tRNA (guanine-N(7)-)-methyltransferase, found in Clostridium botulinum (strain 657 / Type Ba4).